The chain runs to 482 residues: Succinate-semialdehyde dehydrogenase [NADP(+)] GabD (482 aa).

Residues 156 to 157 (WN), 180 to 183 (KPAS), and 233 to 234 (GS) contribute to the NADP(+) site. Glu255 acts as the Proton acceptor in catalysis. Position 256 (Leu256) interacts with NADP(+). The active-site Nucleophile is the Cys289. NADP(+) is bound at residue Glu386.

This sequence belongs to the aldehyde dehydrogenase family. In terms of assembly, homotetramer.

It catalyses the reaction succinate semialdehyde + NADP(+) + H2O = succinate + NADPH + 2 H(+). The catalysed reaction is 5-oxopentanoate + NADP(+) + H2O = glutarate + NADPH + 2 H(+). It participates in amino-acid degradation; 4-aminobutanoate degradation. The protein operates within amino-acid degradation. Its function is as follows. Catalyzes the NADP(+)-dependent oxidation of succinate semialdehyde to succinate. Thereby functions in a GABA degradation pathway that allows some E.coli strains to utilize GABA as a nitrogen source for growth. Also catalyzes the conversion of glutarate semialdehyde to glutarate, as part of a L-lysine degradation pathway that proceeds via cadaverine, glutarate and L-2-hydroxyglutarate. The chain is Succinate-semialdehyde dehydrogenase [NADP(+)] GabD (gabD) from Escherichia coli (strain K12).